A 553-amino-acid polypeptide reads, in one-letter code: Methyl-coenzyme M reductase II subunit alpha (553 aa).

Residue glutamine 150 participates in coenzyme F430 binding. Coenzyme B is bound by residues arginine 228, 259–260 (KH), and arginine 273. Pros-methylhistidine is present on histidine 260. 5-methylarginine is present on arginine 274. Residue tyrosine 335 participates in coenzyme M binding. 2-methylglutamine is present on glutamine 402. Tyrosine 446 is a binding site for coenzyme M. Glycine 447 carries the 1-thioglycine modification. Aspartate 452 bears the (Z)-2,3-didehydroaspartate mark. Position 454 is an S-methylcysteine (cysteine 454).

This sequence belongs to the methyl-coenzyme M reductase alpha subunit family. MCR is a hexamer of two alpha, two beta, and two gamma chains, forming a dimer of heterotrimers. Coenzyme F430 is required as a cofactor. The alpha subunit contains six modified amino acids near the active site region. Is methylated on His-260, Arg-274, Gln-402 and Cys-454, probably by the action of specific S-adenosylmethionine-dependent methyltransferases. Also contains a thioglycine at position 447, forming a thiopeptide bond. Contains a didehydroaspartate residue at position 452. The methylation on C5 of Arg-274 is a post-translational methylation not essential in vivo, but which plays a role for the stability and structural integrity of MCR.

The enzyme catalyses coenzyme B + methyl-coenzyme M = methane + coenzyme M-coenzyme B heterodisulfide. The protein operates within one-carbon metabolism; methyl-coenzyme M reduction; methane from methyl-coenzyme M: step 1/1. Component of the methyl-coenzyme M reductase (MCR) I that catalyzes the reductive cleavage of methyl-coenzyme M (CoM-S-CH3 or 2-(methylthio)ethanesulfonate) using coenzyme B (CoB or 7-mercaptoheptanoylthreonine phosphate) as reductant which results in the production of methane and the mixed heterodisulfide of CoB and CoM (CoM-S-S-CoB). This is the final step in methanogenesis. This is Methyl-coenzyme M reductase II subunit alpha (mrtA) from Methanothermobacter thermautotrophicus (strain ATCC 29096 / DSM 1053 / JCM 10044 / NBRC 100330 / Delta H) (Methanobacterium thermoautotrophicum).